We begin with the raw amino-acid sequence, 238 residues long: Large ribosomal subunit protein uL5c (238 aa).

It belongs to the universal ribosomal protein uL5 family. As to quaternary structure, part of the 50S ribosomal subunit; contacts the 5S rRNA.

The protein localises to the plastid. The protein resides in the chloroplast. In terms of biological role, binds 5S rRNA, forms part of the central protuberance of the 50S subunit. The protein is Large ribosomal subunit protein uL5c (rpl5) of Trieres chinensis (Marine centric diatom).